The chain runs to 645 residues: UvrABC system protein B (645 aa).

Residues 24-414 form the Helicase ATP-binding domain; that stretch reads AGLNDNKRDQ…LFVEQVIRPT (391 aa). 37-44 contacts ATP; the sequence is GVTGSGKT. Residues 90–113 carry the Beta-hairpin motif; that stretch reads YYDYYQPEAYLPQTDTYIEKDSVI. In terms of domain architecture, Helicase C-terminal spans 426–591; the sequence is AEAQVYDVVH…VLPKTIIKPI (166 aa). One can recognise a UVR domain in the interval 610–645; that stretch reads KDTVSSLRKQMLAHAKNLEFEEAAKIKNIIGRINNL.

It belongs to the UvrB family. Forms a heterotetramer with UvrA during the search for lesions. Interacts with UvrC in an incision complex.

The protein localises to the cytoplasm. The UvrABC repair system catalyzes the recognition and processing of DNA lesions. A damage recognition complex composed of 2 UvrA and 2 UvrB subunits scans DNA for abnormalities. Upon binding of the UvrA(2)B(2) complex to a putative damaged site, the DNA wraps around one UvrB monomer. DNA wrap is dependent on ATP binding by UvrB and probably causes local melting of the DNA helix, facilitating insertion of UvrB beta-hairpin between the DNA strands. Then UvrB probes one DNA strand for the presence of a lesion. If a lesion is found the UvrA subunits dissociate and the UvrB-DNA preincision complex is formed. This complex is subsequently bound by UvrC and the second UvrB is released. If no lesion is found, the DNA wraps around the other UvrB subunit that will check the other stand for damage. This chain is UvrABC system protein B, found in Wolbachia sp. subsp. Brugia malayi (strain TRS).